Consider the following 279-residue polypeptide: UTP--glucose-1-phosphate uridylyltransferase (279 aa).

It belongs to the UDPGP type 2 family.

The enzyme catalyses alpha-D-glucose 1-phosphate + UTP + H(+) = UDP-alpha-D-glucose + diphosphate. In terms of biological role, may play a role in stationary phase survival. The polypeptide is UTP--glucose-1-phosphate uridylyltransferase (galU) (Pseudomonas aeruginosa).